The sequence spans 455 residues: UDP-glycosyltransferase 75B2 (455 aa).

The Proton acceptor role is filled by His-16. His-16 contacts an anthocyanidin. UDP-alpha-D-glucose-binding residues include Gln-337, His-352, Trp-355, Ser-357, Glu-360, Asp-376, and Gln-377.

The protein belongs to the UDP-glycosyltransferase family.

It catalyses the reaction (indol-3-yl)acetate + UDP-alpha-D-glucose = 1-O-(indol-3-ylacetyl)-beta-D-glucose + UDP. It functions in the pathway plant hormone metabolism; auxin conjugation. Its function is as follows. Possesses low catalytic activity in vitro. Also active as glucosyltransferase in vitro on benzoates and benzoate derivatives. This is UDP-glycosyltransferase 75B2 (UGT75B2) from Arabidopsis thaliana (Mouse-ear cress).